Here is a 440-residue protein sequence, read N- to C-terminus: MLNCSNQKHTVTFEEACQVFPGGVNSPVRACRSVGVTPPIVSSAQGDIFLDTHGREFIDFCGGWGALIHGHSHPKIVKAIQKTALKGTSYGLTSEEEILFATMLLSSLKLKEHKIRFVSSGTEATMTAVRLARGITNRSIIIKFIGGYHGHADTLLGGISTTEETIDNLTSLIHTPSPHSLLISLPYNNSQILHHVMEALGPQVAGIIFEPICANMGIVLPKAEFLDDIIELCKRFGSLSIMDEVVTGFRVAFQGAKDIFNLSPDITIYGKILGGGLPAAALVGHRSILDHLMPEGTIFQAGTMSGNFLAMATGHAAIQLCQSEGFYDHLSQLEALFYSPIEEEIRSQGFPVSLVHQGTMFSLFFTESAPTNFDEAKNSDVEKFQTFYSEVFDNGVYLSPSPLEANFISSAHTEENLTYAQNIIIDSLIKIFDSSAQRFF.

Lys271 is subject to N6-(pyridoxal phosphate)lysine.

This sequence belongs to the class-III pyridoxal-phosphate-dependent aminotransferase family. HemL subfamily. Homodimer. Pyridoxal 5'-phosphate serves as cofactor.

The protein localises to the cytoplasm. The catalysed reaction is (S)-4-amino-5-oxopentanoate = 5-aminolevulinate. It functions in the pathway porphyrin-containing compound metabolism; protoporphyrin-IX biosynthesis; 5-aminolevulinate from L-glutamyl-tRNA(Glu): step 2/2. The polypeptide is Glutamate-1-semialdehyde 2,1-aminomutase (Chlamydia pneumoniae (Chlamydophila pneumoniae)).